The sequence spans 798 residues: Peregrinol diphosphate synthase TPS1, chloroplastic (798 aa).

The N-terminal 25 residues, 1–25 (MASLSTPNINNTTFVNSKTQLPAVK), are a transit peptide targeting the chloroplast. Lysine 243 contacts substrate. Residues aspartate 377 and aspartate 379 each coordinate Mg(2+). The short motif at 377 to 380 (DLDD) is the DXDD motif element. Lysine 463 serves as a coordination point for substrate.

The protein belongs to the terpene synthase family. It depends on Mg(2+) as a cofactor. Mostly expressed in trichomes of leaves and fruits.

The protein resides in the plastid. The protein localises to the chloroplast. The catalysed reaction is peregrinol diphosphate = (2E,6E,10E)-geranylgeranyl diphosphate + H2O. It participates in secondary metabolite biosynthesis; terpenoid biosynthesis. Its function is as follows. Involved in the biosynthesis of labdane-type diterpenoid including cleroda-dienols, and peregrinol lactones and furan derivatives, dopaminergic diterpenoids that can bind to dopamine receptors in the human pituitary gland, have probably ability to lower prolactin levels, and are used to treat menstrual cycle disorders (e.g. premenstrual syndrome and mastodynia). Terpene synthase that produces peregrinol diphosphate from geranylgeranyl diphosphate (GGPP). This Vitex agnus-castus (Chaste tree) protein is Peregrinol diphosphate synthase TPS1, chloroplastic.